We begin with the raw amino-acid sequence, 635 residues long: Threonine--tRNA ligase (635 aa).

Residues 1–61 (MTVVRLPDGT…ETDSDLVLIT (61 aa)) enclose the TGS domain. The interval 242–533 (DHRKLGKQLD…LIEHHAGALP (292 aa)) is catalytic. Zn(2+)-binding residues include cysteine 333, histidine 384, and histidine 510.

The protein belongs to the class-II aminoacyl-tRNA synthetase family. In terms of assembly, homodimer. It depends on Zn(2+) as a cofactor.

The protein resides in the cytoplasm. The catalysed reaction is tRNA(Thr) + L-threonine + ATP = L-threonyl-tRNA(Thr) + AMP + diphosphate + H(+). Catalyzes the attachment of threonine to tRNA(Thr) in a two-step reaction: L-threonine is first activated by ATP to form Thr-AMP and then transferred to the acceptor end of tRNA(Thr). Also edits incorrectly charged L-seryl-tRNA(Thr). This Nitrosomonas europaea (strain ATCC 19718 / CIP 103999 / KCTC 2705 / NBRC 14298) protein is Threonine--tRNA ligase.